The chain runs to 431 residues: MLEKVRFDLPQDEIPTEWYNILPDLPEPLPEPQDPTGKSFEILKQVLPSKVLELEFSKERYIKIPEEVLQRYLQVGRPTPIIRARKLEEYLGGYIKIYMKMESHTYTGSHKINSALAHVYFAKLDNAKFVSTETGAGQWGSAVALASALFNIQAHIFMVRTSYYAKPYRRYLMQMYNAQVHPSPSEFTRYGREVLAKDPNTPGSLGIAISEAVYYALENGGKYVVGSVVNSDILFKTIAGMEAKKQMEMIGEDPDYIIGVVGGGSNYAALAYPFLGEELRKGKVRRKYIASGAIEVPKMTKGVYKYDYPDTAKILPMLKMYTIGSDFIPAPVYAGGLRYHAVAPTLSLLMYKGIVQARDYSQEEAFSWAKLFSQIEGWVPAPETSHALPILKEIVEEAKKSGEKKTVLISFSGHGLLDLANYADVLGFNKE.

An N6-(pyridoxal phosphate)lysine modification is found at Lys-111.

The protein belongs to the TrpB family. As to quaternary structure, tetramer of two alpha and two beta chains. Pyridoxal 5'-phosphate serves as cofactor.

The catalysed reaction is (1S,2R)-1-C-(indol-3-yl)glycerol 3-phosphate + L-serine = D-glyceraldehyde 3-phosphate + L-tryptophan + H2O. Its pathway is amino-acid biosynthesis; L-tryptophan biosynthesis; L-tryptophan from chorismate: step 5/5. The beta subunit is responsible for the synthesis of L-tryptophan from indole and L-serine. This chain is Tryptophan synthase beta chain 2 (trpB2), found in Sulfurisphaera tokodaii (strain DSM 16993 / JCM 10545 / NBRC 100140 / 7) (Sulfolobus tokodaii).